The following is a 123-amino-acid chain: Ribosome-binding factor A (123 aa).

Belongs to the RbfA family. In terms of assembly, monomer. Binds 30S ribosomal subunits, but not 50S ribosomal subunits or 70S ribosomes.

Its subcellular location is the cytoplasm. Functionally, one of several proteins that assist in the late maturation steps of the functional core of the 30S ribosomal subunit. Associates with free 30S ribosomal subunits (but not with 30S subunits that are part of 70S ribosomes or polysomes). Required for efficient processing of 16S rRNA. May interact with the 5'-terminal helix region of 16S rRNA. The sequence is that of Ribosome-binding factor A from Ralstonia nicotianae (strain ATCC BAA-1114 / GMI1000) (Ralstonia solanacearum).